The chain runs to 93 residues: MALMVLMALVGCSTPPPVQKAQRVKVDPLRSLNMEALCKDQAAKRYNTGEQKIDVTAFEQFQGSYEMRGYTFRKEQFVCSFDADGHFLHLSMR.

The N-terminal stretch at 1-11 (MALMVLMALVG) is a signal peptide. The N-palmitoyl cysteine moiety is linked to residue Cys-12. Residue Cys-12 is the site of S-diacylglycerol cysteine attachment.

The protein resides in the cell membrane. This is an uncharacterized protein from Escherichia coli O6:K15:H31 (strain 536 / UPEC).